Reading from the N-terminus, the 186-residue chain is Large ribosomal subunit protein uL22 (186 aa).

2 stretches are compositionally biased toward basic and acidic residues: residues 157 to 167 (VSKATDDEPTK) and 177 to 186 (RQKEKMLRSE). Residues 157–186 (VSKATDDEPTKKKLSKKKLQRQKEKMLRSE) are disordered.

The protein belongs to the universal ribosomal protein uL22 family.

The sequence is that of Large ribosomal subunit protein uL22 (RpL17) from Drosophila yakuba (Fruit fly).